The chain runs to 63 residues: Large ribosomal subunit protein bL28 (63 aa).

This sequence belongs to the bacterial ribosomal protein bL28 family.

The protein is Large ribosomal subunit protein bL28 of Clostridium botulinum (strain ATCC 19397 / Type A).